The following is a 251-amino-acid chain: MLAKRIIPCLDVRDGRVVKGINFEGLRDAGSILEQARFYNNELADELVFLDISASLESRRTTLEEVLKVSGEVFIPLTVGGGINSVERAREVFLHGADKVSVNTAAVKEPELISRIAEKYGSQAVVVAIDIKKVDGRYIVHTHSGKQPTAYEALEWALKVQELGAGEILLTSMDRDGTKEGYDNDSLALISTAVHIPVIASGGAGSLEHLYDGFTKGHADAALAASIFHFRQHSIREAKQYLRDRGITVRL.

Residues Asp-11 and Asp-130 contribute to the active site.

This sequence belongs to the HisA/HisF family. In terms of assembly, heterodimer of HisH and HisF.

The protein localises to the cytoplasm. The enzyme catalyses 5-[(5-phospho-1-deoxy-D-ribulos-1-ylimino)methylamino]-1-(5-phospho-beta-D-ribosyl)imidazole-4-carboxamide + L-glutamine = D-erythro-1-(imidazol-4-yl)glycerol 3-phosphate + 5-amino-1-(5-phospho-beta-D-ribosyl)imidazole-4-carboxamide + L-glutamate + H(+). Its pathway is amino-acid biosynthesis; L-histidine biosynthesis; L-histidine from 5-phospho-alpha-D-ribose 1-diphosphate: step 5/9. Functionally, IGPS catalyzes the conversion of PRFAR and glutamine to IGP, AICAR and glutamate. The HisF subunit catalyzes the cyclization activity that produces IGP and AICAR from PRFAR using the ammonia provided by the HisH subunit. This Chlorobium luteolum (strain DSM 273 / BCRC 81028 / 2530) (Pelodictyon luteolum) protein is Imidazole glycerol phosphate synthase subunit HisF.